The following is a 704-amino-acid chain: ATP-dependent DNA helicase Hel308 (704 aa).

Residues Q31 and S49–T56 contribute to the ATP site. The Helicase ATP-binding domain maps to R36–N200. Positions D148–H151 match the DEAH box motif. Residues A235–I439 form the Helicase C-terminal domain. The interval V366–K645 is binds Hjc. Residues Y432–V644 form a required for helicase activity region. The inhibits intrinsic ATPase, and helicase stretch occupies residues P646 to A704.

This sequence belongs to the helicase family. Hel308 subfamily. In terms of assembly, monomer; forms a 1:2 complex with Hjc, which may form a complex with Holliday junction DNA. The cofactor is Mg(2+).

The catalysed reaction is Couples ATP hydrolysis with the unwinding of duplex DNA by translocating in the 3'-5' direction.. It catalyses the reaction ATP + H2O = ADP + phosphate + H(+). The enzyme catalyses Couples ATP hydrolysis with the unwinding of duplex DNA at the replication fork by translocating in the 5'-3' direction. This creates two antiparallel DNA single strands (ssDNA). The leading ssDNA polymer is the template for DNA polymerase III holoenzyme which synthesizes a continuous strand.. Its activity is regulated as follows. Helicase activity is inhibited by Hjc and by PCNA123 and PCNA323. In terms of biological role, an ATP, Mg(2+)-dependent DNA 3'-5' and 5'-3' helicase that may be involved in repair of stalled replication forks. Stimulated by both ss and dsDNA. Unwinds both leading and lagging strands in replication fork structures, unlike orthologs in P.furiosus and M.thermautotrophicus which only unwind the lagging strand and only have 3'-5' helicase activity. Preferentially binds dsDNA with overhangs or branched DNA. Able to anneal DNA substrates that could form a replication fork-like structure, has replication fork reversal activity (at least in vitro). The chain is ATP-dependent DNA helicase Hel308 from Sulfurisphaera tokodaii (strain DSM 16993 / JCM 10545 / NBRC 100140 / 7) (Sulfolobus tokodaii).